A 483-amino-acid polypeptide reads, in one-letter code: Succinate semialdehyde dehydrogenase (483 aa).

NAD(+)-binding positions include 156–157, 180–183, and 233–234; these read WN, KPAP, and GS. Catalysis depends on Glu-255, which acts as the Proton acceptor. NAD(+) is bound at residue Leu-256. The active-site Nucleophile is Cys-289. Residue Glu-386 participates in NAD(+) binding.

It belongs to the aldehyde dehydrogenase family. As to quaternary structure, homotetramer.

It carries out the reaction succinate semialdehyde + NAD(+) + H2O = succinate + NADH + 2 H(+). Functionally, involved in the degradation of the pyridine ring of trigonelline (TG; N-methylnicotinate) into succinate and methylamine as carbon and nitrogen sources, respectively. Catalyzes the NAD(+)-dependent oxidation of succinate semialdehyde to succinate. This chain is Succinate semialdehyde dehydrogenase, found in Acinetobacter baylyi (strain ATCC 33305 / BD413 / ADP1).